We begin with the raw amino-acid sequence, 411 residues long: LL-diaminopimelate aminotransferase (411 aa).

Residues Tyr-15 and Gly-42 each contribute to the substrate site. Pyridoxal 5'-phosphate is bound by residues Tyr-72, 108-109 (SK), Tyr-132, Asn-187, Tyr-218, and 246-248 (SFS). The substrate site is built by Lys-109, Tyr-132, and Asn-187. N6-(pyridoxal phosphate)lysine is present on Lys-249. Positions 257 and 292 each coordinate pyridoxal 5'-phosphate. Positions 292 and 388 each coordinate substrate.

Belongs to the class-I pyridoxal-phosphate-dependent aminotransferase family. LL-diaminopimelate aminotransferase subfamily. As to quaternary structure, homodimer. The cofactor is pyridoxal 5'-phosphate.

It catalyses the reaction (2S,6S)-2,6-diaminopimelate + 2-oxoglutarate = (S)-2,3,4,5-tetrahydrodipicolinate + L-glutamate + H2O + H(+). It functions in the pathway amino-acid biosynthesis; L-lysine biosynthesis via DAP pathway; LL-2,6-diaminopimelate from (S)-tetrahydrodipicolinate (aminotransferase route): step 1/1. Involved in the synthesis of meso-diaminopimelate (m-DAP or DL-DAP), required for both lysine and peptidoglycan biosynthesis. Catalyzes the direct conversion of tetrahydrodipicolinate to LL-diaminopimelate. This is LL-diaminopimelate aminotransferase from Synechococcus sp. (strain JA-3-3Ab) (Cyanobacteria bacterium Yellowstone A-Prime).